We begin with the raw amino-acid sequence, 153 residues long: Regulator of sigma D (153 aa).

Belongs to the Rsd/AlgQ family. As to quaternary structure, interacts with RpoD.

It is found in the cytoplasm. Binds RpoD and negatively regulates RpoD-mediated transcription activation by preventing the interaction between the primary sigma factor RpoD with the catalytic core of the RNA polymerase and with promoter DNA. May be involved in replacement of the RNA polymerase sigma subunit from RpoD to RpoS during the transition from exponential growth to the stationary phase. This Pectobacterium carotovorum subsp. carotovorum (strain PC1) protein is Regulator of sigma D.